The chain runs to 653 residues: Hepatocyte growth factor activator serine protease (653 aa).

The first 34 residues, 1–34, serve as a signal peptide directing secretion; the sequence is MGRQAWISSLCPLPRPCPFLLLLLLLVVPRGAQP. The segment at 34–98 is disordered; sequence PQAGRNHTEP…SSSPPGGQVL (65 aa). A propeptide spans 35–369 (removed in mature form); sequence QAGRNHTEPP…RLTACESLAR (335 aa). Residues Asn-39, Asn-47, and Asn-63 are each glycosylated (N-linked (GlcNAc...) asparagine). The segment covering 47-59 has biased composition (low complexity); it reads NVTATPVTPTIPV. Residues 100–147 form the Fibronectin type-II domain; sequence ESGQPCRFPFRYGGRMLHSCTSEGSAYRKWCATTHNYDRDRAWGYCAE. 19 disulfides stabilise this stretch: Cys-105–Cys-130, Cys-119–Cys-145, Cys-161–Cys-172, Cys-166–Cys-183, Cys-185–Cys-194, Cys-199–Cys-227, Cys-225–Cys-234, Cys-242–Cys-253, Cys-247–Cys-264, Cys-266–Cys-275, Cys-283–Cys-364, Cys-304–Cys-346, Cys-335–Cys-359, Cys-392–Cys-519, Cys-430–Cys-446, Cys-438–Cys-508, Cys-533–Cys-602, Cys-565–Cys-581, and Cys-592–Cys-620. The 39-residue stretch at 157-195 folds into the EGF-like 1 domain; sequence ILDPCASGPCLNGGTCSSTHDHGSYHCSCPLAFTGKDCG. A Fibronectin type-I domain is found at 197-237; the sequence is EKCFDETRYEYFEVGDHWARVSEGHVEQCGCMEGQARCEDT. The EGF-like 2 domain occupies 238 to 276; it reads HHTACLSSPCLNGGTCHLIVGTGTSVCTCPLGYAGRFCN. Residues 283–364 enclose the Kringle domain; the sequence is CFLGNGTEYR…SWEYCRLTAC (82 aa). N-linked (GlcNAc...) asparagine glycosylation is present at Asn-287. In terms of domain architecture, Peptidase S1 spans 406–644; it reads IIGGSSSLPG…YVDWINDRIR (239 aa). Residue His-445 is the Charge relay system of the active site. N-linked (GlcNAc...) asparagine glycosylation is present at Asn-466. The Charge relay system role is filled by Asp-495. Asn-544 is a glycosylation site (N-linked (GlcNAc...) asparagine). The active-site Charge relay system is the Ser-596.

It belongs to the peptidase S1 family. As to quaternary structure, heterodimer of a short chain and a long chain linked by a disulfide bond. The active form of HGFAC presents in the serum is derived from the COOH-terminal region of the precursor by the cleavage of bonds between Arg-369 and Val-370 and Arg-405 and Ile-406.

It localises to the secreted. Its function is as follows. Serine protease that hydrolyzes the inactive zymogen hepatocyte growth factor (HGFsc) to an activated disulfide-linked heterodimer, then initiating hepatocyte growth factor receptor signaling pathway. This chain is Hepatocyte growth factor activator serine protease, found in Mus musculus (Mouse).